Consider the following 900-residue polypeptide: Chromodomain-helicase-DNA-binding protein 1-like (900 aa).

A Helicase ATP-binding domain is found at Val52–Asp217. ATP is bound at residue Asp65 to Thr72. The DEAH box signature appears at Asp168 to His171. The region spanning Leu345 to Gln507 is the Helicase C-terminal domain. Ser534 is modified (phosphoserine). Residues Pro546–Glu569 are disordered. Residues Thr606 to Leu640 are regulatory linker segment (RLS). Phosphoserine occurs at positions 612, 623, and 641. The interval Asn620–Lys678 is required for ATPase activity. The tract at residues Ser641–Ala673 is disordered. Residues Glu643–Ala680 adopt a coiled-coil conformation. The segment covering Gln653–Ala673 has biased composition (basic and acidic residues). Residues Ser709 to Pro900 enclose the Macro domain. Ser894 carries the post-translational modification Phosphoserine.

This sequence belongs to the SNF2/RAD54 helicase family. In terms of assembly, interacts with nucleosomes; interacts with the acidic patch of histones. Interacts (via macro domain) with PARP1; interacts only when PARP1 is poly-ADP-ribosylated (PARylated). Interacts with CIAO1.

The protein localises to the nucleus. It is found in the chromosome. The catalysed reaction is ATP + H2O = ADP + phosphate + H(+). Adopts an inactive conformation in absence of DNA damage. Binding to poly-ADP-ribosylated histones activates the ATP-dependent chromatin remodeler activity. Functionally, ATP-dependent chromatin remodeler that mediates chromatin-remodeling following DNA damage. Recruited to DNA damage sites through interaction with poly-ADP-ribose: specifically recognizes and binds histones that are poly-ADP-ribosylated on serine residues in response to DNA damage. Poly-ADP-ribose-binding activates the ATP-dependent chromatin remodeler activity, thereby regulating chromatin during DNA repair. Catalyzes nucleosome sliding away from DNA breaks in an ATP-dependent manner. Chromatin remodeling activity promotes PARP2 removal from chromatin. This is Chromodomain-helicase-DNA-binding protein 1-like (Chd1l) from Mus musculus (Mouse).